Consider the following 539-residue polypeptide: Protein lin-14 (539 aa).

Disordered stretches follow at residues 162-230 (PTLP…SNHS) and 262-293 (ETAPPLRVAPPINGTTNGTAKAGGPERKPRKP). Composition is skewed to polar residues over residues 163–183 (TLPNGQIPTTIGETSLQGTDD) and 193–214 (SVDSNGQKTDSSAASAGDNQNI). Low complexity predominate over residues 274-284 (NGTTNGTAKAG). An involved in sequence-specific DNA-binding region spans residues 296-440 (DDIVKIVRNQ…CRRVRHAKKT (145 aa)).

Cleaved by caspase ced-3 in vitro. In terms of tissue distribution, high levels in hypodermal, intestinal, body wall muscle, nerve ring, and ventral nerve cord cells of embryos and L1 animals.

The protein localises to the nucleus. Functionally, heterochronic protein which controls the choice of stage specific cell fates. Involved in the temporal progression of vulval fate patterning, possibly by inhibiting lin-12. Acts as a transcription factor involved in the stage-specific repression of various genes, including insulin/insulin-like growth factor gene ins-33 and neuropeptide-encoding gene nlp-45. Binds to the consensus sequence 5'-[CT]GGA[AG]-3' in the regulatory elements of target genes. Plays a role in governing the developmental timing of male tail tip morphogenesis. Plays a role in controlling the timing of seam cell development during the larval stages. Plays a role in promoting survival at high temperatures in larvae. Involved in maintenance of the architecture of the ventral nerve cord, perhaps acting via modulating expression of the immunoglobulin domain gene zig-4. May specify L2 and later cell fates, creating a temporal switch. Its function is as follows. May be involved in specifying L1 cell fates. In Caenorhabditis elegans, this protein is Protein lin-14.